Reading from the N-terminus, the 91-residue chain is MAVETIQKPETTTKRKIAPRYRVLLHNDDFNPMEYVVMVLMQTVPSLTQPQAVDIMMEAHTNGTGLVITCDIEPAEFYCEQLKSHGLEQQH.

Belongs to the ClpS family. In terms of assembly, binds to the N-terminal domain of the chaperone ClpA.

Its function is as follows. Involved in the modulation of the specificity of the ClpAP-mediated ATP-dependent protein degradation. In Synechococcus sp. (strain ATCC 27144 / PCC 6301 / SAUG 1402/1) (Anacystis nidulans), this protein is ATP-dependent Clp protease adapter protein ClpS.